Reading from the N-terminus, the 787-residue chain is Integrin beta-6 (787 aa).

A signal peptide spans methionine 1–glycine 21. One can recognise a PSI domain in the interval glycine 22–glutamine 71. The Extracellular segment spans residues glycine 22–proline 708. Cystine bridges form between cysteine 23–cysteine 41, cysteine 31–cysteine 454, cysteine 34–cysteine 59, cysteine 44–cysteine 70, cysteine 197–cysteine 204, cysteine 252–cysteine 293, cysteine 394–cysteine 406, cysteine 426–cysteine 452, cysteine 456–cysteine 476, cysteine 467–cysteine 479, cysteine 481–cysteine 490, cysteine 492–cysteine 519, cysteine 502–cysteine 517, cysteine 511–cysteine 522, cysteine 524–cysteine 537, cysteine 539–cysteine 560, cysteine 544–cysteine 558, cysteine 552–cysteine 563, and cysteine 565–cysteine 574. N-linked (GlcNAc...) asparagine glycans are attached at residues asparagine 48 and asparagine 97. Residues tyrosine 131–leucine 371 enclose the VWFA domain. Aspartate 140, serine 142, and serine 144 together coordinate Mg(2+). Residues serine 144, aspartate 147, aspartate 148, and glutamate 179 each coordinate Ca(2+). Asparagine 235, aspartate 237, proline 239, and glutamate 240 together coordinate Ca(2+). A Mg(2+)-binding site is contributed by glutamate 240. Asparagine 260 carries an N-linked (GlcNAc...) asparagine glycan. Residues aspartate 271 and lysine 355 each contribute to the Ca(2+) site. Asparagine 387 is a glycosylation site (N-linked (GlcNAc...) asparagine). Asparagine 418 carries N-linked (GlcNAc...) asparagine glycosylation. I-EGF domains lie at cysteine 456–glutamate 491, cysteine 492–glutamine 538, cysteine 539–asparagine 575, and cysteine 576–glutamate 615. Residues asparagine 463 and asparagine 471 are each glycosylated (N-linked (GlcNAc...) asparagine). Residue asparagine 541 is glycosylated (N-linked (GlcNAc...) asparagine). The N-linked (GlcNAc...) asparagine glycan is linked to asparagine 575. Cystine bridges form between cysteine 576–cysteine 599, cysteine 583–cysteine 597, cysteine 591–cysteine 602, cysteine 604–cysteine 614, cysteine 617–cysteine 620, cysteine 624–cysteine 670, cysteine 630–cysteine 649, cysteine 633–cysteine 645, and cysteine 678–cysteine 701. The helical transmembrane segment at methionine 709 to tryptophan 729 threads the bilayer. Residues lysine 730–threonine 757 are interaction with HAX1. Over lysine 730–glycine 787 the chain is Cytoplasmic.

The protein belongs to the integrin beta chain family. In terms of assembly, heterodimer of an alpha and a beta subunit. Interacts with FLNB. Interacts with HAX1. ITGAV:ITGB6 interacts with FBN1. ITGAV:ITGB6 interacts with TGFB1.

Its subcellular location is the cell membrane. It is found in the cell junction. It localises to the focal adhesion. Functionally, integrin alpha-V:beta-6 (ITGAV:ITGB6) is a receptor for fibronectin and cytotactin. It recognizes the sequence R-G-D in its ligands. ITGAV:ITGB6 acts as a receptor for fibrillin-1 (FBN1) and mediates R-G-D-dependent cell adhesion to FBN1. Integrin alpha-V:beta-6 (ITGAV:ITGB6) mediates R-G-D-dependent release of transforming growth factor beta-1 (TGF-beta-1) from regulatory Latency-associated peptide (LAP), thereby playing a key role in TGF-beta-1 activation. The chain is Integrin beta-6 (ITGB6) from Ovis aries (Sheep).